Reading from the N-terminus, the 47-residue chain is Protein PsbN (47 aa).

Residues Val7–Asn29 traverse the membrane as a helical segment.

This sequence belongs to the PsbN family.

The protein localises to the plastid membrane. In terms of biological role, may play a role in photosystem I and II biogenesis. The chain is Protein PsbN from Aneura mirabilis (Parasitic liverwort).